A 212-amino-acid polypeptide reads, in one-letter code: Fibroblast growth factor 8b (212 aa).

The first 27 residues, 1–27, serve as a signal peptide directing secretion; sequence MRLKSSRLGYLFLQFMTLCFYTQMTMQ. Asn139 is a glycosylation site (N-linked (GlcNAc...) asparagine).

The protein belongs to the heparin-binding growth factors family.

Its subcellular location is the secreted. In terms of biological role, may act as signaling molecule during development of the midbrain-hindbrain boundary (MHB) organizer, and be involved in patterning of the nervous system. This Danio rerio (Zebrafish) protein is Fibroblast growth factor 8b (fgf8b).